A 376-amino-acid polypeptide reads, in one-letter code: Queuine tRNA-ribosyltransferase (376 aa).

The active-site Proton acceptor is the aspartate 90. Substrate-binding positions include 90–94 (DSGGF), aspartate 144, glutamine 193, and glycine 220. The tract at residues 251–257 (GVGTPED) is RNA binding. The active-site Nucleophile is aspartate 270. The RNA binding; important for wobble base 34 recognition stretch occupies residues 275 to 279 (TRNAR). Cysteine 308, cysteine 310, cysteine 313, and histidine 339 together coordinate Zn(2+).

This sequence belongs to the queuine tRNA-ribosyltransferase family. In terms of assembly, homodimer. Within each dimer, one monomer is responsible for RNA recognition and catalysis, while the other monomer binds to the replacement base PreQ1. It depends on Zn(2+) as a cofactor.

The enzyme catalyses 7-aminomethyl-7-carbaguanine + guanosine(34) in tRNA = 7-aminomethyl-7-carbaguanosine(34) in tRNA + guanine. The protein operates within tRNA modification; tRNA-queuosine biosynthesis. Its function is as follows. Catalyzes the base-exchange of a guanine (G) residue with the queuine precursor 7-aminomethyl-7-deazaguanine (PreQ1) at position 34 (anticodon wobble position) in tRNAs with GU(N) anticodons (tRNA-Asp, -Asn, -His and -Tyr). Catalysis occurs through a double-displacement mechanism. The nucleophile active site attacks the C1' of nucleotide 34 to detach the guanine base from the RNA, forming a covalent enzyme-RNA intermediate. The proton acceptor active site deprotonates the incoming PreQ1, allowing a nucleophilic attack on the C1' of the ribose to form the product. After dissociation, two additional enzymatic reactions on the tRNA convert PreQ1 to queuine (Q), resulting in the hypermodified nucleoside queuosine (7-(((4,5-cis-dihydroxy-2-cyclopenten-1-yl)amino)methyl)-7-deazaguanosine). This chain is Queuine tRNA-ribosyltransferase, found in Cupriavidus taiwanensis (strain DSM 17343 / BCRC 17206 / CCUG 44338 / CIP 107171 / LMG 19424 / R1) (Ralstonia taiwanensis (strain LMG 19424)).